A 331-amino-acid chain; its full sequence is Ribose-phosphate pyrophosphokinase (331 aa).

55–57 provides a ligand contact to ATP; the sequence is DGE. Mg(2+)-binding residues include H148 and D187. The active site involves K211. D-ribose 5-phosphate-binding positions include R213, D237, and 241–245; that span reads DTGGT.

Belongs to the ribose-phosphate pyrophosphokinase family. Class I subfamily. Homohexamer. Mg(2+) serves as cofactor.

The protein resides in the cytoplasm. It carries out the reaction D-ribose 5-phosphate + ATP = 5-phospho-alpha-D-ribose 1-diphosphate + AMP + H(+). Its pathway is metabolic intermediate biosynthesis; 5-phospho-alpha-D-ribose 1-diphosphate biosynthesis; 5-phospho-alpha-D-ribose 1-diphosphate from D-ribose 5-phosphate (route I): step 1/1. Involved in the biosynthesis of the central metabolite phospho-alpha-D-ribosyl-1-pyrophosphate (PRPP) via the transfer of pyrophosphoryl group from ATP to 1-hydroxyl of ribose-5-phosphate (Rib-5-P). The sequence is that of Ribose-phosphate pyrophosphokinase from Prochlorococcus marinus subsp. pastoris (strain CCMP1986 / NIES-2087 / MED4).